The chain runs to 464 residues: Fumarate hydratase class II (464 aa).

Substrate-binding positions include 98–100, Arg126, 129–132, 139–141, and Thr187; these read SGT, HPND, and SSN. His188 acts as the Proton donor/acceptor in catalysis. Ser318 is a catalytic residue. Substrate-binding positions include Ser319 and 324–326; that span reads KVN.

The protein belongs to the class-II fumarase/aspartase family. Fumarase subfamily. As to quaternary structure, homotetramer.

It is found in the cytoplasm. It carries out the reaction (S)-malate = fumarate + H2O. It functions in the pathway carbohydrate metabolism; tricarboxylic acid cycle; (S)-malate from fumarate: step 1/1. In terms of biological role, involved in the TCA cycle. Catalyzes the stereospecific interconversion of fumarate to L-malate. In Photorhabdus laumondii subsp. laumondii (strain DSM 15139 / CIP 105565 / TT01) (Photorhabdus luminescens subsp. laumondii), this protein is Fumarate hydratase class II.